The following is a 119-amino-acid chain: Protein YdaY (119 aa).

The chain is Protein YdaY (ydaY) from Escherichia coli (strain K12).